Reading from the N-terminus, the 310-residue chain is Metal ABC transporter substrate-binding lipoprotein ScbA (310 aa).

The signal sequence occupies residues M1–A19. C20 carries the N-palmitoyl cysteine lipid modification. C20 is lipidated: S-diacylglycerol cysteine. Residues H68, H140, E206, and D281 each contribute to the a divalent metal cation site.

Belongs to the bacterial solute-binding protein 9 family.

Its subcellular location is the cell membrane. In terms of biological role, part of an ATP-binding cassette (ABC) transport system involved in metal import. Binds a metal with high affinity and specificity and delivers it to the membrane permease for translocation into the cytoplasm. Part of an ATP-driven transport system for manganese. Does not exhibit adhesion properties. This Streptococcus cristatus protein is Metal ABC transporter substrate-binding lipoprotein ScbA (scbA).